The following is a 455-amino-acid chain: Probable ATP-dependent RNA helicase DDX47 (455 aa).

Residues Met-1–Pro-10 show a composition bias toward basic and acidic residues. A disordered region spans residues Met-1–Glu-20. An N-acetylalanine modification is found at Ala-2. At Ser-9 the chain carries Phosphoserine. The short motif at Lys-24–Ile-52 is the Q motif element. Residues Ile-55–Cys-226 enclose the Helicase ATP-binding domain. Ala-68–Thr-75 is an ATP binding site. Thr-149 carries the post-translational modification Phosphothreonine. The DEAD box signature appears at Asp-174–Asp-177. In terms of domain architecture, Helicase C-terminal spans Lys-237 to Met-397. Residues Glu-413–Ala-428 show a composition bias toward basic and acidic residues. The segment at Glu-413 to Arg-455 is disordered. Ser-424 carries the post-translational modification Phosphoserine.

This sequence belongs to the DEAD box helicase family. DDX47/RRP3 subfamily. Interacts with AGO1 and AGO2. Interacts with GABARAP. Interacts with NOL8; the interaction is RNA-dependent. In terms of tissue distribution, expressed in skin, lung and breast. Also expressed in the brain.

Its subcellular location is the nucleus. The protein localises to the nucleolus. The catalysed reaction is ATP + H2O = ADP + phosphate + H(+). Functionally, required for efficient ribosome biogenesis. May have a role in mRNA splicing. Involved in apoptosis. The chain is Probable ATP-dependent RNA helicase DDX47 (DDX47) from Homo sapiens (Human).